Reading from the N-terminus, the 1295-residue chain is DNA-directed RNA polymerase subunit beta' (1295 aa).

Cysteine 60, cysteine 62, cysteine 75, and cysteine 78 together coordinate Zn(2+). 3 residues coordinate Mg(2+): aspartate 516, aspartate 518, and aspartate 520. Residues cysteine 841, cysteine 914, cysteine 921, and cysteine 924 each contribute to the Zn(2+) site.

The protein belongs to the RNA polymerase beta' chain family. As to quaternary structure, the RNAP catalytic core consists of 2 alpha, 1 beta, 1 beta' and 1 omega subunit. When a sigma factor is associated with the core the holoenzyme is formed, which can initiate transcription. Requires Mg(2+) as cofactor. The cofactor is Zn(2+).

It carries out the reaction RNA(n) + a ribonucleoside 5'-triphosphate = RNA(n+1) + diphosphate. DNA-dependent RNA polymerase catalyzes the transcription of DNA into RNA using the four ribonucleoside triphosphates as substrates. This Dehalococcoides mccartyi (strain CBDB1) protein is DNA-directed RNA polymerase subunit beta'.